The primary structure comprises 4047 residues: MIPNLQLFLSLILFGLLNHVSSIDYEEIHIEDSYETRSRILMVDGNVWLHAGKDKNITFKTTGNGRIYVDETDVSKLPDIASFKQLVGRIENTSQMFTTLKSRQDTQTSAMRVVLNSAKHYLVALRNMTLEVNILKKWKTDKMARDMRRRGLLVKMTRQIIGINKLIAINACDPNKCSNGGTCIPSFGAKFTCLCPPHFTGTTCEADIDECSVYNGTTAGCQNNGTCINNRGGFECQCQSGYHGSLCQYHMSACSKTFELCGPHGHCIESIVDPTGQSSSDTTTYKCICDWGFKVSSDKNNPTCVDVNECESNPCHPGVDCINLPGSFVCSGCPKGYKTDGNVCIDVNECEGEIRVCSPLSKCHNTLGSYYCDSCPTGYSGDGGNCVKDDSCVKNKCHKLATCKVTDDGYSAVGDYTCYCPDGYVGDGIGEEGCVKSASNVCQNHNCVNAGKCKPTSDTEYKCECEAGFLGKFCEKTSPCQTNPCKNGGTCIAVENSAYCDCPEHFFGRACEEEEEHCGSHFTHSSGNYTFDLQRSNKTELSICDFVFNIPAANSAVVMTFTEFDKFTQEGSGPTDCAKTDANLTLYDGPEDSSSEFATFCGDSHSVHAPLSDTPITMTSTGAMLRFRGTQGSFTIKWETVERKCGYRSSKPEGIISVPQNHQDIVCEWFISAPGGKIIEVTIPPVSMHSKDIEKCDQNSLEIYDGYATYDKHRILETCSSTLESQVVRTTGPFLTVAFISNMLQSDAGLETIRGFVLKYKFTTPDRECGAEIDNDSNDFSFSGVIESPNYGSLYPPNMDCTWKINGTLSNGSYSGDMVLKLTFDEYDVKSGFSANGPGMHYRSFRRLLPRNEVEYGIAPGFSRVFAYRNLFDMGTCTNDFLKIHDGDGTLVQETCNPRRPPNVLTVNNPAAVLTFHSDSAEQGKGFRIQYEMLCEKRVNGNGTIQTWNFPNGGAAGTCTYIIEAPKTHVISVRFLTIGLRVLPMSECFYTPNAVETYENYVEFSGGRTDNALFNRRYVCARYPFVEGAWMSVSAARRLQIKVGSDGNPMFKGLSLEYKTSDVGCGGVFSSMTGTISSPNYPEKYQPHMHCVYNLYVSWSKTVKLTFDVFDLEVTPAKSCEYDRVEIYTSYHNETVHGELLGKFCGAMIPPSIYSTTNTMAVVFVSDRSVAGPGWNAKFEAVSRKTTCDFTLTAPSNNLIFDPQQLKFDKCTYHIAVHENQRILIKMNNMSLPCDKSSLMFRNGPSETSPPFSSLPPESEICTPKVNYMPVIRSFSNRVTIVYKSINSEGSFFNLTYETITSGCGGRVDGLTGIVSAPQYPLGDKKNLKCDWTVAVALGNKVRFALTALDDLNSSDSGGFCPLFAANRIDFFDSALQGNQHLKRYCAKEMASEPITSDDNELIIKYVQSGGFQSKKIFGFSGHFTTLCNGIVHEAISGSIQSPGYPYKVYSNQFCTWTIKVPKGNRIVATVHHFSISQKSYFEGGINCITDMLKVDDTDLAEAEVTFKKTDYNITNSVNKYCDKAIPRVIRSRHNSMKLTYSSQGDPTNQFWLSWNTLGCSRDITAPQQLIITKENIDPEVDEFECQYKIQAPIGKQINLKIDKMDILPIGTNCTYTKDFSGFAIFMSDSNKSGTPFQTYCSSINQQNISSHTNELFLFLSMKKDKLKTNVFFNATVEFVDVPQSSQSDICGQVINLERGKKNYITSPGYPSAYLPGIKCNFLINAPPGYHIEYALEKYYSPYYHDDRKTDKPRFMSPYTANYTCKWYLAYNVGMLSFYEGNSSSSSPVERLCDESDTVQTFELYASQSLVIFEGASNYMSQKSGEGVRDQIGFVLSMIPKCGGVVYAESKPQTISLYHEGEGICNVTIKKKDPQDSEINIRLEEYTKLNSSSTHTIDDRIDIYVGGVLKYTEMLKATDNTMQEYASDEEMMISVQNANAPHSAIIVVSTDDKSCGGEVRHSQGTIYAPTRRLDKPFDCGWAISNSNGNTVTLSILDHNLKSTPNCTDSYIEIRANNSSGKLIKRQCDISSIDSTEYESQSLYVFLRYRPSASDGNDDDDDTPDIDQQDSNKRPLFKARYEKVSGGRPKSRYVSSPMIDNTEMMVWTLDIVDEKAGILVKFIDLYLPSPTSYLRFTESGENDDVASSDYEEVTGVMAPAEKFFETNLIRVYGKLEKSDKFSFTWDPVPLNYRNLTLAKDKPAKVYDCGGDLTPTYEWDYFTNPLPAGQSFGYEENLHCRWIIRRPMFTGIELKFDYLELEDVQNCAFDFVSFRLQFDDQPEENDDVDLSSVSKHCALVRSNNTFNFSVNRALHIHFVTDRSRHGIGFKLKYRLTCNSFEHIRPGIFFEHTLTSPNYDGNFHTPSVWKCQYSLIIESNRKVSVEIVDLDIQENSPCSYNNALILGNRFSELVETHSQYSKSSKYCGKLEQGERLNFTSARGRLFIKYNSGPNSRKGFKMIIKEQLTECPSGVLHVDDNSPSRVLNSPEFPQRIPNSVECEYVMAAPNGHRLMLTFDSENFDIDGNQKNCDLLDYIEIRDGPTVHSEVIGIYCGNQAPSTIFSTTNFLYMKLHTSEYGKSRRFVATYGIATCGGTVMVRENVTTHITSPSFPYPFATPVQCQWNVKSPNTHMIEAKVDHVWLFYNPNCTMEQLMIRDGNSTANPLIGPVCVPRHAPDVFTRSASNQITVQFTSNSTTTRGGRQYCSNKKCGFDVAVTMSGEKCGGRITNLIGTLTPPGYPGKLLSHVKCIWDFKMKPGFIYRFKITFPGANAYHKFDNQVFRIAKQHCFPDVAVVEGFPPYDGAQYSTYFCKNETQITSITDTIRIVYDDSHTREMISAIGNDQPLNSTFYAPFTIDYMAIPANSENQGCTLQINKNLTTEFHLRNKVNGKGVGLDSFCHVSIEKPANFESVHIEISDYKADSELQPAGAKCFSWGAHLKIKSDEPVPIETTVCDGKSMKNKQSEMIYVNPQIDLFISQLFRDQEGQQFNLTIEFQKCGGVISSPNTGDITSPNFGSGLKYLPGSKCRWVLEAPEGQIVKVKIVEMQIAYDHECENDHLIIGEGRQADVNTIHKYCHKMDGEQEQKLEDRFKIIKSHGRYLTLIWVTNMKYEEAGWKIQYEFLNENEECGYHTSGMSGTIYTPMFGDKDYENDLECVWDIQVPLGYHINLKFKDFDVETAENCAKDQLLISQEHSTRANSPNGDYYFLFQDEEKETPLCGIEHPKDFESESNRVRLNFTTDSQTTARGFRVNWEAECGAIYRLNHGVITSPYYPNGYPNDITCTYLIAPPDQNSVIAIKFADFDLATMRTSFGRAPCEDDYLQIIDTGTDRVLHTFCASEPMPKDALVFKGAIGLKFVSDKSYYWMEEDNKYGRKGSKGFQLAYSINKCGDNIELREGTGFITTVTSPAFPLPYTKDLDCVWNITTDPNRQLNIRFEEMKLEAFHDCSADYIEFFDSSDIMANKTLGKFCGTMDKIPQYRIVTSGPNLLIHMRTDFNVNSGGFKLAVISSLGQKEGCGGKLTATTSWQTLTSPKDEDGNYPPALLCGWTISGPVDSQLQIRIDGVDTEQLEYPPGDRPSPECIDALAIYDGQEFFSPLLAGDICTSGTPLPKILYTSHRHAFITFETDRDGTGRGFNISYSIVDSDCGGWLKATNEIKTLVYKGITSDDNKEMNKERSHQRCRFMIQGPKTEPVIVNFQQFNIPSKAGDCSDSFVEIRDVGSLQECKHPACAREPNQRKITKLCGTHVPTSHVSNTNTIQIIVSADIMPNKNQSRPSLKFEYNILDSCNRTIDTNTIKSGRLTSPNYPQVYSENSTCVTNLQSSNQKMLLVFNDFTLEEPNNVNKNCDYDYLMLKEGDSNGTYYCGSTLPKALMTSGKDLTALLKSDHSLNHAGYDASYYTVVSERDDQIQFADSYELEGVISSIGYPNGYNKSYTQIFTLRPPNSHDCSIIFTDVSISMTQLPEECFQPTEEYLEIEVKFKTQVKKARIRSCTFALKKARELILEADNNDRYIKFAFKSDAKSENDGRGFKIRWKCHSIGKTQAVLPS.

A signal peptide spans 1–22; sequence MIPNLQLFLSLILFGLLNHVSS. N-linked (GlcNAc...) asparagine glycans are attached at residues Asn-56, Asn-92, and Asn-127. The EGF-like 1 domain occupies 168–205; that stretch reads AINACDPNKCSNGGTCIPSFGAKFTCLCPPHFTGTTCE. 26 disulfides stabilise this stretch: Cys-172-Cys-183, Cys-177-Cys-193, Cys-195-Cys-204, Cys-211-Cys-227, Cys-221-Cys-236, Cys-238-Cys-247, Cys-310-Cys-321, Cys-315-Cys-330, Cys-333-Cys-344, Cys-350-Cys-363, Cys-357-Cys-372, Cys-375-Cys-386, Cys-392-Cys-403, Cys-397-Cys-418, Cys-420-Cys-434, Cys-442-Cys-453, Cys-447-Cys-463, Cys-465-Cys-474, Cys-480-Cys-491, Cys-485-Cys-500, Cys-502-Cys-511, Cys-518-Cys-544, Cys-577-Cys-601, Cys-645-Cys-667, Cys-696-Cys-719, and Cys-769-Cys-801. The EGF-like 2; calcium-binding domain maps to 207-248; it reads DIDECSVYNGTTAGCQNNGTCINNRGGFECQCQSGYHGSLCQ. N-linked (GlcNAc...) asparagine glycosylation is found at Asn-215 and Asn-224. The EGF-like 3; calcium-binding domain occupies 306-345; that stretch reads DVNECESNPCHPGVDCINLPGSFVCSGCPKGYKTDGNVCI. An EGF-like 4; calcium-binding domain is found at 346–387; that stretch reads DVNECEGEIRVCSPLSKCHNTLGSYYCDSCPTGYSGDGGNCV. 3 consecutive EGF-like domains span residues 388-435, 438-475, and 476-512; these read KDDS…EGCV, ASNV…KFCE, and KTSP…RACE. CUB domains lie at 518–641, 645–763, 769–934, 934–1061, 1065–1182, 1188–1300, 1304–1427, 1428–1558, 1560–1680, and 1691–1841; these read CGSH…WETV, CGYR…YKFT, CGAE…YEML, LCEK…YKTS, CGGV…FEAV, CDFT…YETI, CGGR…FTTL, CNGI…WNTL, CSRD…VEFV, and CGQV…MIPK. 3 N-linked (GlcNAc...) asparagine glycosylation sites follow: Asn-528, Asn-537, and Asn-583. N-linked (GlcNAc...) asparagine glycans are attached at residues Asn-775, Asn-806, and Asn-811. Cys-877 and Cys-896 are disulfide-bonded. Asn-942 carries N-linked (GlcNAc...) asparagine glycosylation. 3 cysteine pairs are disulfide-bonded: Cys-1065–Cys-1091, Cys-1120–Cys-1145, and Cys-1188–Cys-1211. The N-linked (GlcNAc...) asparagine glycan is linked to Asn-1133. N-linked (GlcNAc...) asparagine glycosylation is present at Asn-1229. Cysteines 1234 and 1262 form a disulfide. Asn-1294 is a glycosylation site (N-linked (GlcNAc...) asparagine). Cys-1304 and Cys-1330 are joined by a disulfide. N-linked (GlcNAc...) asparagine glycosylation occurs at Asn-1353. Cystine bridges form between Cys-1428/Cys-1455, Cys-1488/Cys-1522, and Cys-1560/Cys-1586. Asn-1513 carries an N-linked (GlcNAc...) asparagine glycan. 4 N-linked (GlcNAc...) asparagine glycosylation sites follow: Asn-1613, Asn-1631, Asn-1648, and Asn-1674. Cysteines 1614 and 1641 form a disulfide. A disulfide bond links Cys-1691 and Cys-1720. N-linked (GlcNAc...) asparagine glycosylation is found at Asn-1762, Asn-1782, Asn-1866, and Asn-1890. Cys-1955 and Cys-1979 are disulfide-bonded. Residues 1955 to 2083 form the CUB 11 domain; it reads CGGEVRHSQG…PLFKARYEKV (129 aa). N-linked (GlcNAc...) asparagine glycans are attached at residues Asn-2005, Asn-2016, and Asn-2017. A disulfide bridge links Cys-2006 with Cys-2027. The tract at residues 2052 to 2071 is disordered; it reads ASDGNDDDDDTPDIDQQDSN. Over residues 2055 to 2067 the composition is skewed to acidic residues; it reads GNDDDDDTPDIDQ. A glycan (N-linked (GlcNAc...) asparagine) is linked at Asn-2193. 2 cysteine pairs are disulfide-bonded: Cys-2207/Cys-2238 and Cys-2265/Cys-2295. 5 CUB domains span residues 2207–2334, 2335–2463, 2467–2588, 2590–2717, and 2721–2859; these read CGGD…YRLT, CNSF…IKEQ, CPSG…YGIA, CGGT…VTMS, and CGGR…YMAI. Asn-2301 and Asn-2305 each carry an N-linked (GlcNAc...) asparagine glycan. Intrachain disulfides connect Cys-2335–Cys-2368 and Cys-2395–Cys-2424. Asn-2434 carries N-linked (GlcNAc...) asparagine glycosylation. 2 disulfide bridges follow: Cys-2467-Cys-2498 and Cys-2590-Cys-2619. N-linked (GlcNAc...) asparagine glycans are attached at residues Asn-2599, Asn-2645, Asn-2657, and Asn-2692. An intrachain disulfide couples Cys-2646 to Cys-2668. 2 cysteine pairs are disulfide-bonded: Cys-2721–Cys-2747 and Cys-2786–Cys-2809. 4 N-linked (GlcNAc...) asparagine glycosylation sites follow: Asn-2811, Asn-2845, Asn-2875, and Asn-2988. 4 cysteine pairs are disulfide-bonded: Cys-2996–Cys-3025, Cys-3052–Cys-3074, Cys-3127–Cys-3154, and Cys-3181–Cys-3217. 7 consecutive CUB domains span residues 2996–3121, 3127–3254, 3255–3385, 3387–3508, 3515–3641, 3645–3783, and 3786–3900; these read CGGV…YEFL, CGYH…WEAE, CGAI…YSIN, CGDN…VISS, CGGK…YSIV, CGGW…YNIL, and CNRT…YYTV. Asn-3235 carries an N-linked (GlcNAc...) asparagine glycan. Cystine bridges form between Cys-3255–Cys-3281, Cys-3315–Cys-3335, and Cys-3387–Cys-3418. Asn-3421 and Asn-3461 each carry an N-linked (GlcNAc...) asparagine glycan. 2 cysteine pairs are disulfide-bonded: Cys-3445-Cys-3468 and Cys-3515-Cys-3544. Asn-3635 carries N-linked (GlcNAc...) asparagine glycosylation. 2 cysteine pairs are disulfide-bonded: Cys-3645-Cys-3680 and Cys-3708-Cys-3742. N-linked (GlcNAc...) asparagine glycosylation is found at Asn-3770, Asn-3787, Asn-3812, Asn-3858, and Asn-3930. 2 disulfides stabilise this stretch: Cys-3786–Cys-3815 and Cys-3845–Cys-3863.

It localises to the secreted. Its function is as follows. Cotransporter which plays a role in lipoprotein, vitamin and iron metabolism, by facilitating their uptake. This Caenorhabditis elegans protein is Cubilin homolog.